Here is an 84-residue protein sequence, read N- to C-terminus: Small ribosomal subunit protein uS17 (84 aa).

Belongs to the universal ribosomal protein uS17 family. Part of the 30S ribosomal subunit.

Functionally, one of the primary rRNA binding proteins, it binds specifically to the 5'-end of 16S ribosomal RNA. In Borrelia recurrentis (strain A1), this protein is Small ribosomal subunit protein uS17.